Reading from the N-terminus, the 202-residue chain is MNPEYDYLFKLLLIGDSGVGKSCLLLRFADDSYLDSYISTIGVDFKIRTVEQDGKTIKLQIWDTAGQERFRTITSSYYRGAHGIIVTYDVTDLESFNNVKQWLNEIDRYASENVNKLLVGNKCDLTSQKVVSTETAKAFADELGIPFLETSAKNATNVEEAFMAMTAAIKTRMASQPAGGSKPPTVQIRGQPVNQQSGCCSS.

GTP-binding positions include 15–23 (GDSGVGKSC), 33–40 (YLDSYIST), 63–67 (DTAGQ), 121–124 (NKCD), and 151–153 (SAK). The Effector region signature appears at 37–45 (YISTIGVDF). The disordered stretch occupies residues 174–202 (ASQPAGGSKPPTVQIRGQPVNQQSGCCSS). The span at 192 to 202 (PVNQQSGCCSS) shows a compositional bias: polar residues. Residues Cys-199 and Cys-200 are each lipidated (S-geranylgeranyl cysteine).

Belongs to the small GTPase superfamily. Rab family.

The protein resides in the cell membrane. It localises to the golgi apparatus. It is found in the trans-Golgi network membrane. Its subcellular location is the golgi apparatus membrane. Protein transport. Regulator of membrane traffic from the Golgi apparatus towards the endoplasmic reticulum (ER). The polypeptide is Ras-related protein RABD2c (RABD2C) (Arabidopsis thaliana (Mouse-ear cress)).